A 424-amino-acid chain; its full sequence is Tubby protein homolog 1 (424 aa).

A disordered region spans residues 19–47 (MLEDKQKQKRHQSAGSVRTTTTTSSMSMN). Low complexity predominate over residues 37 to 47 (TTTTTSSMSMN).

It belongs to the TUB family. In terms of assembly, interacts with rgb-3.

The protein resides in the cytoplasm. The protein localises to the cell projection. It is found in the axon. It localises to the dendrite. Its subcellular location is the cilium. In terms of biological role, has a role in fat regulation independent of daf-16. Implicated in ciliar sensory function which is required for normal sensory behavior such as chemotaxis. Functions in life span control via the insulin/IGF-1 pathway. Thought to be involved in neuronal trafficking. The sequence is that of Tubby protein homolog 1 from Caenorhabditis briggsae.